The primary structure comprises 169 residues: NADH-quinone oxidoreductase subunit B (169 aa).

[4Fe-4S] cluster-binding residues include Cys-42, Cys-43, Cys-107, and Cys-136.

Belongs to the complex I 20 kDa subunit family. In terms of assembly, NDH-1 is composed of 14 different subunits. Subunits NuoB, C, D, E, F, and G constitute the peripheral sector of the complex. Requires [4Fe-4S] cluster as cofactor.

The protein resides in the cell inner membrane. The catalysed reaction is a quinone + NADH + 5 H(+)(in) = a quinol + NAD(+) + 4 H(+)(out). In terms of biological role, NDH-1 shuttles electrons from NADH, via FMN and iron-sulfur (Fe-S) centers, to quinones in the respiratory chain. The immediate electron acceptor for the enzyme in this species is believed to be ubiquinone. Couples the redox reaction to proton translocation (for every two electrons transferred, four hydrogen ions are translocated across the cytoplasmic membrane), and thus conserves the redox energy in a proton gradient. The polypeptide is NADH-quinone oxidoreductase subunit B (Wolinella succinogenes (strain ATCC 29543 / DSM 1740 / CCUG 13145 / JCM 31913 / LMG 7466 / NCTC 11488 / FDC 602W) (Vibrio succinogenes)).